We begin with the raw amino-acid sequence, 222 residues long: MHYREKSLGELAIAIPRATALFREFNLDFCCGGKQTLQHAAGKRQLDIAMLEARLAELDAEPPSEKNWRAAPLNDMIPYIVQRFHDRHREQLPELIIMAEKVERVHQDKSACPHGLAAQLTLILDDLSQHMMKEERILFPMIQAGMGRQAAGPISVMEHEHDDAGQQLEVVKTLTDNLTPPADACNTWRALYAGIGEFITDLMEHIHLENNLLFPRALRGEA.

The protein belongs to the RIC family. YtfE subfamily. As to quaternary structure, homodimer.

It localises to the cytoplasm. Functionally, di-iron-containing protein involved in the repair of iron-sulfur clusters damaged by oxidative and nitrosative stress conditions. This Musicola paradisiaca (strain Ech703) (Dickeya paradisiaca) protein is Iron-sulfur cluster repair protein YtfE.